A 322-amino-acid chain; its full sequence is uncharacterized protein (322 aa).

2 stretches are compositionally biased toward basic residues: residues 1–16 and 43–61; these read MPGN…KSGT and LRPH…RRPV. Positions 1–69 are disordered; it reads MPGNSRRRGA…PVKRADETET (69 aa). S-adenosyl-L-methionine-binding residues include Gly261, Ile281, and Leu290.

This sequence belongs to the class IV-like SAM-binding methyltransferase superfamily. RNA methyltransferase TrmH family.

This is an uncharacterized protein from Mycobacterium tuberculosis (strain CDC 1551 / Oshkosh).